Reading from the N-terminus, the 230-residue chain is Ubiquitin carboxyl-terminal hydrolase isozyme L3 (230 aa).

Positions 5–229 (RWLPLEANPE…LRFNAIALSA (225 aa)) constitute a UCH catalytic domain. Residues 8-13 (PLEANP) are interaction with ubiquitin. C95 serves as the catalytic Nucleophile. S130 is modified (phosphoserine). The interval 152–159 (AHEGQTEA) is interaction with ubiquitin. Crossover loop which restricts access of large ubiquitin adducts to the active site. H169 serves as the catalytic Proton donor. The interaction with ubiquitin stretch occupies residues 219–224 (ELRFNA).

This sequence belongs to the peptidase C12 family. As to quaternary structure, preferentially binds diubiquitin; the interaction does not hydrolyze diubiquitin but, in vitro, inhibits the hydrolyzing activity on other substrates.

The protein resides in the cytoplasm. The catalysed reaction is Thiol-dependent hydrolysis of ester, thioester, amide, peptide and isopeptide bonds formed by the C-terminal Gly of ubiquitin (a 76-residue protein attached to proteins as an intracellular targeting signal).. Its activity is regulated as follows. Inhibited by monoubiquitin and diubiquitin. In terms of biological role, deubiquitinating enzyme (DUB) that controls levels of cellular ubiquitin through processing of ubiquitin precursors and ubiquitinated proteins. Thiol protease that recognizes and hydrolyzes a peptide bond at the C-terminal glycine of either ubiquitin or NEDD8. Has a 10-fold preference for Arg and Lys at position P3, and exhibits a preference towards 'Lys-48'-linked ubiquitin chains. Deubiquitinates ENAC in apical compartments, thereby regulating apical membrane recycling. Indirectly increases the phosphorylation of IGFIR, AKT and FOXO1 and promotes insulin-signaling and insulin-induced adipogenesis. Required for stress-response retinal, skeletal muscle and germ cell maintenance. May be involved in working memory. Can hydrolyze UBB(+1), a mutated form of ubiquitin which is not effectively degraded by the proteasome. In Sus scrofa (Pig), this protein is Ubiquitin carboxyl-terminal hydrolase isozyme L3 (UCHL3).